We begin with the raw amino-acid sequence, 569 residues long: Proline--tRNA ligase (569 aa).

This sequence belongs to the class-II aminoacyl-tRNA synthetase family. ProS type 1 subfamily. In terms of assembly, homodimer.

The protein resides in the cytoplasm. The catalysed reaction is tRNA(Pro) + L-proline + ATP = L-prolyl-tRNA(Pro) + AMP + diphosphate. Functionally, catalyzes the attachment of proline to tRNA(Pro) in a two-step reaction: proline is first activated by ATP to form Pro-AMP and then transferred to the acceptor end of tRNA(Pro). As ProRS can inadvertently accommodate and process non-cognate amino acids such as alanine and cysteine, to avoid such errors it has two additional distinct editing activities against alanine. One activity is designated as 'pretransfer' editing and involves the tRNA(Pro)-independent hydrolysis of activated Ala-AMP. The other activity is designated 'posttransfer' editing and involves deacylation of mischarged Ala-tRNA(Pro). The misacylated Cys-tRNA(Pro) is not edited by ProRS. This is Proline--tRNA ligase from Legionella pneumophila subsp. pneumophila (strain Philadelphia 1 / ATCC 33152 / DSM 7513).